We begin with the raw amino-acid sequence, 139 residues long: Toxin FitB (139 aa).

A PINc domain is found at 2-123; it reads ILLDTNVISE…HSLTVATRDT (122 aa). Mg(2+)-binding residues include Asp5 and Asp104.

It belongs to the PINc/VapC protein family. In terms of assembly, forms a heterodimer with FitA, 4 FitAB heterodimers form a complex that binds to promoter DNA. The complex is also seen in solution. This protein does not actually contact DNA. The cofactor is Mg(2+).

Toxic component of a type II toxin-antitoxin (TA) system. Plays a role in the speed with which bacteria traverse human epithelial cells; disruption of the locus increases the speed of trafficking about 2-4-fold. FitAB binds to its own promoter better than FitA alone. The expected nuclease activity was not observed for the FitAB complex, perhaps because FitA (the antitoxin) prevents metal binding and thus catalysis by FitB. The protein is Toxin FitB (fitB) of Neisseria gonorrhoeae (strain ATCC 700825 / FA 1090).